The primary structure comprises 469 residues: MQLQRLGAPLLKRLVGGCIRQSTAPIMPCVVVSGSGGFLTPVRTYMPLPNDQSDFSPYIEIDLPSESRIQSLHKSGLAAQEWVACEKVHGTNFGIYLINQGDHEVVRFAKRSGIMDPNENFFGYHILIDEFTAQIRILNDLLKQKYGLSRVGRLVLNGELFGAKYKHPLVPKSEKWCTLPNGKKFPIAGVQIQREPFPQYSPELHFFAFDIKYSVSGAEEDFVLLGYDEFVEFSSKVPNLLYARALVRGTLDECLAFDVENFMTPLPALLGLGNYPLEGNLAEGVVIRHVRRGDPAVEKHNVSTIIKLRCSSFMELKHPGKQKELKETFIDTVRSGALRRVRGNVTVISDSMLPQVEAAANDLLLNNVSDGRLSNVLSKIGREPLLSGEVSQVDVALMLAKDALKDFLKEVDSLVLNTTLAFRKLLITNVYFESKRLVEQKWKELMQEEAAAQSEAIPPLSPAAPTKGE.

A mitochondrion-targeting transit peptide spans 1–44 (MQLQRLGAPLLKRLVGGCIRQSTAPIMPCVVVSGSGGFLTPVRT). ATP is bound by residues 59 to 61 (IEI), 86 to 92 (EKVHGTN), Asn92, Arg111, Glu159, Phe209, and 307 to 309 (KLR). Lys87 (N6-AMP-lysine intermediate) is an active-site residue. The interval 450-469 (AAAQSEAIPPLSPAAPTKGE) is disordered.

This sequence belongs to the RNA ligase 2 family. Component of the RNA editing complex (editosome), a 1600 kDa complex composed of at least 20 proteins. Interacts with terminal uridylyltransferase MEAT1.

The protein resides in the mitochondrion. The enzyme catalyses ATP + (ribonucleotide)n-3'-hydroxyl + 5'-phospho-(ribonucleotide)m = (ribonucleotide)n+m + AMP + diphosphate.. Essential for RNA editing. RNA editing in kinetoplastid mitochondria inserts and deletes uridylates at multiple sites in pre-mRNAs as directed by guide RNAs. The sequence is that of RNA-editing ligase 1, mitochondrial (REL1) from Trypanosoma brucei brucei (strain 927/4 GUTat10.1).